A 483-amino-acid polypeptide reads, in one-letter code: Glutamyl-tRNA(Gln) amidotransferase subunit A (483 aa).

Active-site charge relay system residues include Lys76 and Ser151. Residue Ser175 is the Acyl-ester intermediate of the active site.

This sequence belongs to the amidase family. GatA subfamily. Heterotrimer of A, B and C subunits.

It catalyses the reaction L-glutamyl-tRNA(Gln) + L-glutamine + ATP + H2O = L-glutaminyl-tRNA(Gln) + L-glutamate + ADP + phosphate + H(+). Allows the formation of correctly charged Gln-tRNA(Gln) through the transamidation of misacylated Glu-tRNA(Gln) in organisms which lack glutaminyl-tRNA synthetase. The reaction takes place in the presence of glutamine and ATP through an activated gamma-phospho-Glu-tRNA(Gln). This is Glutamyl-tRNA(Gln) amidotransferase subunit A from Pseudomonas entomophila (strain L48).